The following is a 273-amino-acid chain: HTH-type transcriptional activator RhaS (273 aa).

The HTH araC/xylS-type domain occupies 174 to 272; that stretch reads YQLLDWLQNN…SQSPRDLRSQ (99 aa). 2 DNA-binding regions (H-T-H motif) span residues 191-212 and 239-262; these read PELADRFALPLRTLHRQLKNKT and VTDIAYLCGFGDSNHFSTLFKREF.

As to quaternary structure, binds DNA as a dimer.

The protein resides in the cytoplasm. Functionally, activates expression of the rhaBAD and rhaT operons. In Yersinia pestis bv. Antiqua (strain Angola), this protein is HTH-type transcriptional activator RhaS.